Here is a 363-residue protein sequence, read N- to C-terminus: Protein CPn_1058/CP_0792/CPj1058/CpB1100 (363 aa).

A signal peptide spans 1 to 27; it reads MKLYQTLRGIVLVSTGCIFLGMHGGYA.

The protein belongs to the chlamydial CPn_1058/CT_355/TC_0634 family.

The sequence is that of Protein CPn_1058/CP_0792/CPj1058/CpB1100 from Chlamydia pneumoniae (Chlamydophila pneumoniae).